The chain runs to 349 residues: Short chain dehydrogenase/reductase dpfgH (349 aa).

The chain crosses the membrane as a helical span at residues 9–31; the sequence is LCIRVVDSLYGSFLYLPLAILFL. Positions 65, 89, and 115 each coordinate NADP(+). N-linked (GlcNAc...) asparagine glycosylation occurs at Asn-118. The NADP(+) site is built by Asn-142 and Lys-164. Catalysis depends on proton donor residues Ser-191 and Ser-192. Residues Tyr-223 and Lys-227 each coordinate NADP(+). Residue Tyr-223 is the Proton acceptor of the active site. The active-site Lowers pKa of active site Tyr is Lys-227. A glycan (N-linked (GlcNAc...) asparagine) is linked at Asn-334.

Belongs to the short-chain dehydrogenases/reductases (SDR) family.

Its subcellular location is the membrane. It participates in secondary metabolite biosynthesis; terpenoid biosynthesis. Short chain dehydrogenase/reductase; part of the gene cluster that mediates the biosynthesis of diterpenoid pyrones. The first step of the pathway is the synthesis of the alpha-pyrone moiety by the polyketide synthase dpfgA via condensation of one acetyl-CoA starter unit with 3 malonyl-CoA units and 2 methylations. The alpha-pyrone is then combined with geranylgeranyl pyrophosphate (GGPP) formed by the GGPP synthase dpfgD through the action of the prenyltransferase dpfgC to yield a linear alpha-pyrone diterpenoid. Subsequent steps in the diterpenoid pyrone biosynthetic pathway involve the decalin core formation, which is initiated by the epoxidation of the C10-C11 olefin by the FAD-dependent oxidoreductase dpfgE, and is followed by a cyclization cascade catalyzed by the terpene cyclase dpfgB. The short chain dehydrogenase/reductase dpfgG then oxidizes the 8S hydroxy group to a ketone and the short chain dehydrogenase/reductase dpfgH reduces the ketone to the 8R hydroxy group to yield higginsianin B. Higginsianin B is further methylated by the methyltransferase dpfgI to produce the intermediate named FDDP B. The cytochrome P450 monooxygenase dfgpJ then catalyzes a three-step oxidation at C-27 to generate a carboxylic acid as well as C-26 hydroxylation. Finally, methyltransferase dpfgK methylates the carboxylic acid generated by dpfgJ, yielding the final diterpenoid pyrones from the pathway which were named FDDP D and FDDP E. This chain is Short chain dehydrogenase/reductase dpfgH, found in Gibberella zeae (strain ATCC MYA-4620 / CBS 123657 / FGSC 9075 / NRRL 31084 / PH-1) (Wheat head blight fungus).